Reading from the N-terminus, the 237-residue chain is MNRPLLSVAGSLFVAAWALYIFSCFQHGHVPPRRIPPHDTFGALPTAALPSNARDTAAHPSDTADNTSGSSTTTDPRSHGNAPPAPVGGAAQTHTQPPVQTAMRIALWNRATHGEQGALQHLLAGLWIQTEISPNSGDIHPLLFFDREHAEITFSRASVQEIFLVDSAHTHRKTVSFLTRNTAISSIRRRLEVTFESHEVIHVRAVEDVARLKIGSTSMWDGQYTRYHAGPASAPSP.

Residues 1–28 (MNRPLLSVAGSLFVAAWALYIFSCFQHG) form the signal peptide. The interval 52 to 96 (NARDTAAHPSDTADNTSGSSTTTDPRSHGNAPPAPVGGAAQTHTQ) is disordered. A compositionally biased stretch (polar residues) spans 63 to 75 (TADNTSGSSTTTD).

This is an uncharacterized protein from Treponema pallidum (strain Nichols).